A 213-amino-acid polypeptide reads, in one-letter code: Holliday junction branch migration complex subunit RuvA (213 aa).

The tract at residues 1 to 64 is domain I; it reads MIARLVGFLV…EDSITLFGFA (64 aa). The segment at 65-143 is domain II; that stretch reads SYLERDWFRL…AIALFSSAKG (79 aa). The interval 144–159 is flexible linker; that stretch reads DHLAVEDISQPAASAH. Positions 160 to 213 are domain III; the sequence is HAGNFMADAVSALLNLGFKPAEAQRVVQLASEELGDQATLDSLVRLALRLSSKH.

This sequence belongs to the RuvA family. Homotetramer. Forms an RuvA(8)-RuvB(12)-Holliday junction (HJ) complex. HJ DNA is sandwiched between 2 RuvA tetramers; dsDNA enters through RuvA and exits via RuvB. An RuvB hexamer assembles on each DNA strand where it exits the tetramer. Each RuvB hexamer is contacted by two RuvA subunits (via domain III) on 2 adjacent RuvB subunits; this complex drives branch migration. In the full resolvosome a probable DNA-RuvA(4)-RuvB(12)-RuvC(2) complex forms which resolves the HJ.

Its subcellular location is the cytoplasm. The RuvA-RuvB-RuvC complex processes Holliday junction (HJ) DNA during genetic recombination and DNA repair, while the RuvA-RuvB complex plays an important role in the rescue of blocked DNA replication forks via replication fork reversal (RFR). RuvA specifically binds to HJ cruciform DNA, conferring on it an open structure. The RuvB hexamer acts as an ATP-dependent pump, pulling dsDNA into and through the RuvAB complex. HJ branch migration allows RuvC to scan DNA until it finds its consensus sequence, where it cleaves and resolves the cruciform DNA. The protein is Holliday junction branch migration complex subunit RuvA of Zymomonas mobilis subsp. mobilis (strain ATCC 31821 / ZM4 / CP4).